Here is a 189-residue protein sequence, read N- to C-terminus: Interferon alpha-12 (189 aa).

The signal sequence occupies residues Met1–Gly23. Disulfide bonds link Cys24–Cys122 and Cys52–Cys162. The N-linked (GlcNAc...) asparagine glycan is linked to Asn101.

Belongs to the alpha/beta interferon family.

The protein resides in the secreted. In terms of biological role, produced by macrophages, IFN-alpha have antiviral activities. Interferon stimulates the production of two enzymes: a protein kinase and an oligoadenylate synthetase. This is Interferon alpha-12 (Ifna12) from Mus musculus (Mouse).